Reading from the N-terminus, the 379-residue chain is Protein RecA (379 aa).

Residues 1-24 (MSVDVKSAQSSKSDSLQAEPRPGE) are disordered. A compositionally biased stretch (polar residues) spans 7-16 (SAQSSKSDSL). 84 to 91 (GPESSGKT) serves as a coordination point for ATP.

Belongs to the RecA family.

It is found in the cytoplasm. In terms of biological role, can catalyze the hydrolysis of ATP in the presence of single-stranded DNA, the ATP-dependent uptake of single-stranded DNA by duplex DNA, and the ATP-dependent hybridization of homologous single-stranded DNAs. It interacts with LexA causing its activation and leading to its autocatalytic cleavage. The polypeptide is Protein RecA (Prochlorococcus marinus (strain MIT 9303)).